The primary structure comprises 78 residues: Probable Fe(2+)-trafficking protein (78 aa).

It belongs to the Fe(2+)-trafficking protein family. As to quaternary structure, monomer.

Could be a mediator in iron transactions between iron acquisition and iron-requiring processes, such as synthesis and/or repair of Fe-S clusters in biosynthetic enzymes. The protein is Probable Fe(2+)-trafficking protein of Buchnera aphidicola subsp. Schizaphis graminum (strain Sg).